A 654-amino-acid chain; its full sequence is MDLHTAVYNAAHDGKLPLLQKLLAGRGREELEELLGEVAGGGTPLLIAARRGHLDVVEYLVDHCGASVEASGSVHFDGETIEGAPPLWAASAAGHLAVVRSLLRRGASVNRTTRTNSTPLRAACFDGHLDVVRYLVGEHKADLEVANRHGHTCLMISCYKGHREIARYLLERGAQVNRRSAKGNTALHDCAESGSLEILQLLLGCHARMERDGYGMTPLLAASVTGHTNIVEYLIQEQPGHEQLSGTELPGEGSSQVAGNHCSTPEEAEPYESCCPTSREAAVEALELLGATYVDKKRDLLGALKHWRRAMELRHQGGGYLPKPEPQQLVLAYDYSREVTTPQELEALITDPDEMRMQALLIRERILGPSHPDTSYYIRYRGAVYADSGNFERCIRLWKYALDMQQNNLEPLSPMTASSFLSFAELFSYVLQDRSAKGNLGMQLGFADLMGVLSKGVREVERALQLPKEPGDSAQFTKAIAIILHLLYLLEKVECTPSQEHLKHQTVYRLLKCAPRGKNGFTPLHMAVDKETTNVGRYRVGVFPSLQVVKVLLDCGADPDSRDFDNNTPLHIAAQNNCPAIMDALIEAGAHMDATNAFKKTAYELLDSKLLAKSTVQPFNYVTLQCLAARALDRNKVPYKGFIPEELEAFIQLH.

7 ANK repeats span residues 2–31, 40–70, 82–111, 115–145, 149–178, 182–211, and 214–243; these read DLHT…REEL, GGGT…SVEA, EGAP…SVNR, TNST…DLEV, HGHT…QVNR, KGNT…RMER, and YGMT…GHEQ. Ser108 carries the phosphoserine modification. The interval 242–265 is disordered; sequence EQLSGTELPGEGSSQVAGNHCSTP. Over residues 253–263 the composition is skewed to polar residues; the sequence is GSSQVAGNHCS. TPR repeat units follow at residues 283-317 and 375-408; these read VEAL…RHQG and SYYI…QQNN. ANK repeat units lie at residues 519-561 and 565-594; these read NGFT…DPDS and DNNT…HMDA. The residue at position 608 (Ser608) is a Phosphoserine.

This sequence belongs to the fem-1 family. As to quaternary structure, component of a CRL2 E3 ubiquitin-protein ligase complex, also named ECS (Elongin BC-CUL2/5-SOCS-box protein) complex, composed of CUL2, Elongin BC (ELOB and ELOC), RBX1 and substrate-specific adapter FEM1A. Interacts with PTGER4. Interacts with NFKB1; the interaction is direct. Phosphorylated; highly phosphorylated in myoblasts and myotubes. Phosphorylation at Ser-108 and Ser-608 promote PGE2-EP4-mediated inhibition of inflammation. Dephosphorylated by protein phosphatase 2A (PP2A). In terms of tissue distribution, preferentially expressed in cardiac muscle, brain and liver (at protein level). Also expressed in skeletal muscle.

It is found in the mitochondrion. Its subcellular location is the cytoplasm. Its pathway is protein modification; protein ubiquitination. Functionally, substrate-recognition component of a Cul2-RING (CRL2) E3 ubiquitin-protein ligase complex of the DesCEND (destruction via C-end degrons) pathway, which recognizes a C-degron located at the extreme C terminus of target proteins, leading to their ubiquitination and degradation. The C-degron recognized by the DesCEND pathway is usually a motif of less than ten residues and can be present in full-length proteins, truncated proteins or proteolytically cleaved forms. The CRL2(FEM1A) complex specifically recognizes proteins with an arginine at the C-terminus: recognizes and binds proteins ending with -Lys/Arg-Xaa-Arg and -Lys/Arg-Xaa-Xaa-Arg C-degrons, such as SIL1 or OR51B2, leading to their ubiquitination and degradation. Involved in PGE2-EP4-mediated inhibition of inflammation of macrophages via interaction with NFKB1 and PTGER4. Promotes inflammation in brain microglia through MAP2K4/MKK4-mediated signaling. The chain is Protein fem-1 homolog A-A from Mus musculus (Mouse).